Reading from the N-terminus, the 272-residue chain is HTH-type transcriptional repressor AllR (272 aa).

Residues 1-20 (MTEVRRRGRPGQAEPTAQKG) form a disordered region. An HTH iclR-type domain is found at 21 to 83 (AQALERGIAI…SQLGWWHIGL (63 aa)). A DNA-binding region (H-T-H motif) is located at residues 43–62 (VSDISGSLDLPLSTTFRLLK). Positions 98 to 267 (VLSVAGPFMH…AKDISTALGL (170 aa)) constitute an IclR-ED domain. Glyoxylate is bound by residues 154-156 (SGA), Asp-207, Cys-217, and 234-236 (SIS).

Its function is as follows. Negative regulator of allantoin and glyoxylate utilization operons. Binds to the gcl promoter and to the allS-allA intergenic region. The chain is HTH-type transcriptional repressor AllR (allR) from Salmonella paratyphi A (strain ATCC 9150 / SARB42).